The following is a 173-amino-acid chain: RNA silencing suppressor p19 (173 aa).

Basic and acidic residues predominate over residues 1-21; the sequence is MERAIQRSDAREQANSERWDG. Residues 1–34 form a disordered region; sequence MERAIQRSDAREQANSERWDGRCGGTITPFKLPD.

It belongs to the tombusvirus protein p19 family. In terms of assembly, homodimer.

Functionally, viral suppressor of RNA silencing which binds specifically to silencing RNAs (siRNAs). Acts as a molecular caliper to specifically select siRNAs based on the length of the duplex region of the RNA. This Cucumis sativus (Cucumber) protein is RNA silencing suppressor p19.